The primary structure comprises 571 residues: Potassium-transporting ATPase potassium-binding subunit (571 aa).

The next 12 membrane-spanning stretches (helical) occupy residues 5–25 (GWMQ…PLGG), 64–84 (LAYA…LYAL), 136–156 (GLTH…VALI), 179–199 (LYVL…QGMP), 220–240 (VGPV…GGFF), 254–274 (LSNF…TNVF), 285–305 (WAIL…TYWA), 330–350 (FGIA…CGAV), 375–395 (IIGG…VAIF), 421–441 (MLGI…ATVV), 488–508 (LAIG…AIAG), and 527–547 (GGLF…LTFF).

It belongs to the KdpA family. The system is composed of three essential subunits: KdpA, KdpB and KdpC.

The protein resides in the cell inner membrane. Part of the high-affinity ATP-driven potassium transport (or Kdp) system, which catalyzes the hydrolysis of ATP coupled with the electrogenic transport of potassium into the cytoplasm. This subunit binds the periplasmic potassium ions and delivers the ions to the membrane domain of KdpB through an intramembrane tunnel. The sequence is that of Potassium-transporting ATPase potassium-binding subunit from Methylorubrum extorquens (strain PA1) (Methylobacterium extorquens).